The chain runs to 599 residues: Protein linkin (599 aa).

The N-terminal stretch at 1 to 19 (MKKILPIIWLINLVSGSLS) is a signal peptide. The Extracellular portion of the chain corresponds to 20–553 (LEKKAPDLLG…SRLYVTPSAL (534 aa)). N-linked (GlcNAc...) asparagine glycans are attached at residues N50, N117, N163, N361, and N378. The helical transmembrane segment at 554 to 574 (IVQSLAVIALVCCMLLMVVVF) threads the bilayer. At 575 to 599 (LHYREKKEDRYERQQQSHRFHFDAM) the chain is on the cytoplasmic side.

It belongs to the TIP family. In terms of tissue distribution, expressed in all somatic gonadal cells including distal tip cells, anchor cell, uterine precursor cells and spermatheca precursor cells of the hermaphrodite. Also expressed in the pharynx, pharyngeal-intestinal valve, intestine, excretory cell and canal, seam cells, a subset of hypodermal cells, vulval precursor cells of the hermaphrodite and hook precursor cells in the male.

It localises to the apical cell membrane. The protein localises to the lateral cell membrane. Functionally, probable cell adhesion protein involved in gonadal cell migration. The sequence is that of Protein linkin from Caenorhabditis elegans.